Consider the following 260-residue polypeptide: Type III pantothenate kinase (260 aa).

Residue 6–13 (DAGNTRTK) participates in ATP binding. Substrate is bound by residues Tyr88 and 95-98 (GVDR). Asp97 serves as the catalytic Proton acceptor. Ser121 provides a ligand contact to ATP. Position 184 (Thr184) interacts with substrate.

The protein belongs to the type III pantothenate kinase family. As to quaternary structure, homodimer. NH4(+) is required as a cofactor. Requires K(+) as cofactor.

It localises to the cytoplasm. It catalyses the reaction (R)-pantothenate + ATP = (R)-4'-phosphopantothenate + ADP + H(+). It participates in cofactor biosynthesis; coenzyme A biosynthesis; CoA from (R)-pantothenate: step 1/5. In terms of biological role, catalyzes the phosphorylation of pantothenate (Pan), the first step in CoA biosynthesis. In Saccharophagus degradans (strain 2-40 / ATCC 43961 / DSM 17024), this protein is Type III pantothenate kinase.